We begin with the raw amino-acid sequence, 198 residues long: Recombination protein RecR (198 aa).

The C4-type zinc finger occupies 57-72; the sequence is CSVCGHITDQDPCYIC. The Toprim domain occupies 80 to 175; that stretch reads SVICVVQDPK…KLSRIAHGLP (96 aa).

The protein belongs to the RecR family.

Its function is as follows. May play a role in DNA repair. It seems to be involved in an RecBC-independent recombinational process of DNA repair. It may act with RecF and RecO. The chain is Recombination protein RecR from Bacillus licheniformis (strain ATCC 14580 / DSM 13 / JCM 2505 / CCUG 7422 / NBRC 12200 / NCIMB 9375 / NCTC 10341 / NRRL NRS-1264 / Gibson 46).